The primary structure comprises 255 residues: Tryptophan synthase alpha chain (255 aa).

Active-site proton acceptor residues include glutamate 49 and aspartate 60.

This sequence belongs to the TrpA family. In terms of assembly, tetramer of two alpha and two beta chains.

It catalyses the reaction (1S,2R)-1-C-(indol-3-yl)glycerol 3-phosphate + L-serine = D-glyceraldehyde 3-phosphate + L-tryptophan + H2O. The protein operates within amino-acid biosynthesis; L-tryptophan biosynthesis; L-tryptophan from chorismate: step 5/5. Functionally, the alpha subunit is responsible for the aldol cleavage of indoleglycerol phosphate to indole and glyceraldehyde 3-phosphate. This is Tryptophan synthase alpha chain from Desulfovibrio desulfuricans (strain ATCC 27774 / DSM 6949 / MB).